The sequence spans 482 residues: Proline--tRNA ligase (482 aa).

It belongs to the class-II aminoacyl-tRNA synthetase family. ProS type 3 subfamily. Homodimer.

It localises to the cytoplasm. The catalysed reaction is tRNA(Pro) + L-proline + ATP = L-prolyl-tRNA(Pro) + AMP + diphosphate. Functionally, catalyzes the attachment of proline to tRNA(Pro) in a two-step reaction: proline is first activated by ATP to form Pro-AMP and then transferred to the acceptor end of tRNA(Pro). The polypeptide is Proline--tRNA ligase (Mycoplasmopsis synoviae (strain 53) (Mycoplasma synoviae)).